The primary structure comprises 110 residues: Large ribosomal subunit protein uL22 (110 aa).

The protein belongs to the universal ribosomal protein uL22 family. Part of the 50S ribosomal subunit.

Functionally, this protein binds specifically to 23S rRNA; its binding is stimulated by other ribosomal proteins, e.g. L4, L17, and L20. It is important during the early stages of 50S assembly. It makes multiple contacts with different domains of the 23S rRNA in the assembled 50S subunit and ribosome. In terms of biological role, the globular domain of the protein is located near the polypeptide exit tunnel on the outside of the subunit, while an extended beta-hairpin is found that lines the wall of the exit tunnel in the center of the 70S ribosome. In Halorhodospira halophila (strain DSM 244 / SL1) (Ectothiorhodospira halophila (strain DSM 244 / SL1)), this protein is Large ribosomal subunit protein uL22.